The chain runs to 978 residues: MPEYLINGIPVNFPFEPYQVQRDYMARVIECLQNSSNGVLESPTGTGKTLSLLCSSLAWILHKKAQVQASQRTNVSELKEFEFEKKKMGGGGGGPKPEMDKLLDELNENSGKEGGRWGVPKIIYASRTHSQLTQAMQEMKNTSYGFMRAVILGSRDQLCIHPEVAKEEGNAVKTNLCKAKIQARACSFYSRVEACKERPEITGSTIMDIEDLVRVSTKLKACPFFMSKELIENADVLFMPYNYLLDPKARKANNLELANTIIILDEAHNVDKMCEESASMQIRSSDIALCIDDVTSIMKVMDNTVAIPEDDDAKKDFTIDDLALLKEMLLSLEKTVDEIPVMFSQGGSTQPGTYIFEIFEKANIKEGNYHIIAQLLENIIQYIATITEKNNFVRRGGGLQILAESLSIMFAGSGPQYRESIDKCYKCHIDIEEQKKVRGNTKQADGWTATKQLVPSVKANAKVINFWCFNPGFGMRQLLGRNARSIILTSGTLAPLKPLISELDIPIAVKLENPHIIDGSQVCVKIVGQGPDKESLNSSYGNRDNPKYISSLGRTILSFCPIIPGGLLVFFPSYPLLNKCQEAWQETGIWAQISRTKPIFVEPRGKDQFLNTMTEYYAKINDPDGKGAVFMAVCRGKVSEGLDFADMNGRACIITGLPFPPLKDARVILKKRYLQEVRTRENEIISGDEWYSLEAARAVNQAIGRVIRHKNDYGAILLCDNRFHNPRQKAQLSSWIQKHLNTAQHPTFGPIVRELSQFFRNAEKTLPQAKLTRSLAPLGPEPPIALVPDSTSLLVSGETKKKLDDIKNNFIKIENSNAVTAFKLSDYQHAHRSDATAASGKDFLSRLNTQVRTIDFNDMSSAGPSSQAGLVAIHKRERSNESTMVTQQKKRKVVLIPQETISLDDSLEVLEVKPERQAPEDRVELLKVIKSSIVPAQYKRFLVVLTGYRNDRDFGTMMGGMVEIFNRPELYYLLKGEI.

The Helicase ATP-binding domain occupies 7-318 (NGIPVNFPFE…EDDDAKKDFT (312 aa)). Position 42–49 (42–49 (SPTGTGKT)) interacts with ATP. 4 residues coordinate [4Fe-4S] cluster: cysteine 159, cysteine 177, cysteine 186, and cysteine 222. Positions 265 to 268 (DEAH) match the DEAH box motif.

It belongs to the helicase family. RAD3/XPD subfamily.

Its subcellular location is the nucleus. It carries out the reaction ATP + H2O = ADP + phosphate + H(+). In terms of biological role, a probable ATP-dependent DNA helicase implicated in DNA repair and the maintenance of genomic stability. Acts as an anti-recombinase to counteract toxic recombination and limit crossover during meiosis. Regulates meiotic recombination and crossover homeostasis by physically dissociating strand invasion events and thereby promotes noncrossover repair by meiotic synthesis dependent strand annealing (SDSA) as well as disassembly of D loop recombination intermediates. The protein is Regulator of telomere elongation helicase 1 homolog of Culex quinquefasciatus (Southern house mosquito).